The sequence spans 126 residues: Aspartate 1-decarboxylase (126 aa).

The active-site Schiff-base intermediate with substrate; via pyruvic acid is S25. S25 carries the pyruvic acid (Ser) modification. T57 contributes to the substrate binding site. The active-site Proton donor is the Y58. Substrate is bound at residue 73-75; that stretch reads GGA.

This sequence belongs to the PanD family. Heterooctamer of four alpha and four beta subunits. Pyruvate serves as cofactor. Is synthesized initially as an inactive proenzyme, which is activated by self-cleavage at a specific serine bond to produce a beta-subunit with a hydroxyl group at its C-terminus and an alpha-subunit with a pyruvoyl group at its N-terminus.

The protein resides in the cytoplasm. The catalysed reaction is L-aspartate + H(+) = beta-alanine + CO2. The protein operates within cofactor biosynthesis; (R)-pantothenate biosynthesis; beta-alanine from L-aspartate: step 1/1. In terms of biological role, catalyzes the pyruvoyl-dependent decarboxylation of aspartate to produce beta-alanine. This Xylella fastidiosa (strain 9a5c) protein is Aspartate 1-decarboxylase.